A 441-amino-acid polypeptide reads, in one-letter code: MIPVTSKSSSGFALPDLSTDRAHRAVPAEGAARAALEGRRTGIAALLPFVGPAVIASIGYMDPGNFATNIQAGAAYGYRLLWVVLAANAIAMLFQAMSAKLGIVTGRNLAELCREHFPAPIVWGMWIASEIAAMATDLAEFLGGALAFALLCHLPLFAGMIATALATCAILALEKRGFRPLEAAIAALVGVIGACYLGELMIAPQDWHAAAFHLVVPQIPDRAALTIAVGIIGATIMPHTLYLHSGLTQDRIAPRDDTERRRLMRFSNREVVVALGLAGFVNLAMVMMAASAFHASAPGMADIGDAYHTLIPVLGPAAGVLFLVALLTSGVSSSVVGTMAGQVVMQGFMRRRLSVWMRRAVTIAPAFAVVACGCDVTRAMVASQVVLSFVLPMPMIALLILSARNDVMGRYAMRMPLRIVAGTATVVIVGLNAYLVWAAFN.

The next 11 helical transmembrane spans lie at Thr41–Met61, Ala74–Phe94, His116–Thr136, Phe141–Ile161, Ala183–Ala203, Ala223–Leu243, Val271–Ser291, Ile311–Val331, Ala360–Met380, Val381–Leu401, and Ile419–Ala439.

The protein belongs to the NRAMP family.

Its subcellular location is the cell inner membrane. Its function is as follows. H(+)-stimulated, divalent metal cation uptake system. The chain is Divalent metal cation transporter MntH from Burkholderia ambifaria (strain ATCC BAA-244 / DSM 16087 / CCUG 44356 / LMG 19182 / AMMD) (Burkholderia cepacia (strain AMMD)).